We begin with the raw amino-acid sequence, 37 residues long: Large ribosomal subunit protein bL36c (37 aa).

It belongs to the bacterial ribosomal protein bL36 family.

The protein resides in the plastid. The chain is Large ribosomal subunit protein bL36c from Cuscuta reflexa (Southern Asian dodder).